The primary structure comprises 849 residues: Autoinducer 1 sensor kinase/phosphatase LuxN (849 aa).

Transmembrane regions (helical) follow at residues I9–F29, V41–I61, S160–M180, I196–F216, F220–L242, Y251–I275, and W283–Y301. Residues S468–P683 enclose the Histidine kinase domain. H471 is modified (phosphohistidine; by autocatalysis). The Response regulatory domain maps to T722–L835. A 4-aspartylphosphate modification is found at D771.

The protein resides in the cell inner membrane. The catalysed reaction is ATP + protein L-histidine = ADP + protein N-phospho-L-histidine.. At low cell density, in the absence of AI-1 (autoinducer 1), LuxN has a kinase activity and autophosphorylates on His-471. The phosphoryl group is then transferred on Asp-771 of the response regulator domain. The phosphoryl group is transferred to LuxU, and ultimately to LuxO. At high cell density, in the presence of AI-1, the kinase activity is inactivated, and the response regulator domain has a phosphatase activity. LuxN phosphatase acts on itself. As LuxU could function to establish an equilibrium between the aspartyl-phosphate of LuxN and the aspartyl-phosphate of LuxO, LuxU transfers phosphate from LuxO to LuxN and finally phosphate is drained from the system. The polypeptide is Autoinducer 1 sensor kinase/phosphatase LuxN (luxN) (Vibrio harveyi (Beneckea harveyi)).